Reading from the N-terminus, the 594-residue chain is UvrABC system protein C (594 aa).

One can recognise a GIY-YIG domain in the interval 13–99 (HSSGVYQYFD…IKQLKPKYNI (87 aa)). The UVR domain maps to 205 to 240 (DKLIKELELKMERLSNNLRFEEALIYRDRIAKIQKI).

This sequence belongs to the UvrC family. In terms of assembly, interacts with UvrB in an incision complex.

The protein resides in the cytoplasm. In terms of biological role, the UvrABC repair system catalyzes the recognition and processing of DNA lesions. UvrC both incises the 5' and 3' sides of the lesion. The N-terminal half is responsible for the 3' incision and the C-terminal half is responsible for the 5' incision. The polypeptide is UvrABC system protein C (Helicobacter pylori (strain Shi470)).